We begin with the raw amino-acid sequence, 1016 residues long: Nonsense-mediated mRNA decay factor SMG5 (1016 aa).

The residue at position 2 (serine 2) is an N-acetylserine. A phosphoserine mark is found at serine 2 and serine 423. Disordered stretches follow at residues 408 to 561 (NPVP…PSEA) and 594 to 637 (PTTN…RSCR). The segment covering 449 to 466 (KSRKFSRLSCLRRRRHPP) has biased composition (basic residues). A compositionally biased stretch (polar residues) spans 594 to 603 (PTTNPHTSAS). The segment covering 619 to 628 (ASEEGSESEG) has biased composition (acidic residues). Residues 798 to 841 (QSEQESLLQQAQAQFRMAQEEARRNRLMRDMAQLRLQLEVSQLE) are a coiled coil. The PINc domain maps to 872–995 (RQLATSGRFI…GPMQAALQAA (124 aa)).

As to quaternary structure, interacts with TERT, PPP2CA and SMG1. Part of a complex that contains SMG1, SMG5, SMG7, PPP2CA, a short isoform of UPF3A (isoform UPF3AS, but not isoform UPF3AL) and phosphorylated UPF1. Not detected in complexes that contain unphosphorylated UPF1. In terms of tissue distribution, ubiquitous.

The protein localises to the cytoplasm. It is found in the nucleus. Its function is as follows. Plays a role in nonsense-mediated mRNA decay. Does not have RNase activity by itself. Promotes dephosphorylation of UPF1. Together with SMG7 is thought to provide a link to the mRNA degradation machinery involving exonucleolytic pathways, and to serve as an adapter for UPF1 to protein phosphatase 2A (PP2A), thereby triggering UPF1 dephosphorylation. Necessary for TERT activity. This Homo sapiens (Human) protein is Nonsense-mediated mRNA decay factor SMG5.